Consider the following 276-residue polypeptide: Homeobox protein TOS8 (276 aa).

Positions 176–185 (NSVRGSNNGY) are enriched in polar residues. The interval 176 to 199 (NSVRGSNNGYSAKEKKHKAHGKRS) is disordered. Residues 189-199 (EKKHKAHGKRS) show a composition bias toward basic residues. A DNA-binding region (homeobox; TALE-type) is located at residues 194–256 (AHGKRSNLPK…NARRRKIFSG (63 aa)).

The protein belongs to the TALE/CUP9 homeobox family.

It is found in the nucleus. This chain is Homeobox protein TOS8 (TOS8), found in Saccharomyces cerevisiae (strain ATCC 204508 / S288c) (Baker's yeast).